Reading from the N-terminus, the 158-residue chain is Protein BTG2 (158 aa).

Position 147 is a phosphoserine; by MAPK1 and MAPK3 (S147). S149 bears the Phosphoserine; by MAPK14 mark.

It belongs to the BTG family. Interacts with PRKCABP. Interacts with CNOT7 and CNOT8; indicative for an association with the CCR4-NOT complex. Interacts with PIN1, inducing mitochondrial depolarization. Phosphorylated at Ser-147 by MAPK1/ERK2 and MAPK3/ERK1, and at Ser-149 by MAPK14, leading to PIN1-binding and mitochondrial depolarization.

In terms of biological role, anti-proliferative protein; the function is mediated by association with deadenylase subunits of the CCR4-NOT complex. Activates mRNA deadenylation in a CNOT6 and CNOT7-dependent manner. In vitro can inhibit deadenylase activity of CNOT7 and CNOT8. Involved in cell cycle regulation. Could be involved in the growth arrest and differentiation of the neuronal precursors. Modulates transcription regulation mediated by ESR1. Involved in mitochondrial depolarization and neurite outgrowth. The protein is Protein BTG2 (BTG2) of Homo sapiens (Human).